A 376-amino-acid polypeptide reads, in one-letter code: Tetraacyldisaccharide 4'-kinase (376 aa).

51-58 provides a ligand contact to ATP; it reads AVGGTGKT.

It belongs to the LpxK family.

The catalysed reaction is a lipid A disaccharide + ATP = a lipid IVA + ADP + H(+). The protein operates within glycolipid biosynthesis; lipid IV(A) biosynthesis; lipid IV(A) from (3R)-3-hydroxytetradecanoyl-[acyl-carrier-protein] and UDP-N-acetyl-alpha-D-glucosamine: step 6/6. In terms of biological role, transfers the gamma-phosphate of ATP to the 4'-position of a tetraacyldisaccharide 1-phosphate intermediate (termed DS-1-P) to form tetraacyldisaccharide 1,4'-bis-phosphate (lipid IVA). This Bacteroides fragilis (strain YCH46) protein is Tetraacyldisaccharide 4'-kinase.